The primary structure comprises 128 residues: MAVKKSRKRRVKKNIESGVAHIHSTFNNTLVMITDVHGNAVAWSSAGSLGFKGSRKSTPFAAQMASEAAAKGAMEHGMKTVEVAVKGPGSGREAAIRALQTTGLEVTSIKDVTPVPHNGCRPPKRRRV.

The protein belongs to the universal ribosomal protein uS11 family. In terms of assembly, part of the 30S ribosomal subunit. Interacts with proteins S7 and S18. Binds to IF-3.

In terms of biological role, located on the platform of the 30S subunit, it bridges several disparate RNA helices of the 16S rRNA. Forms part of the Shine-Dalgarno cleft in the 70S ribosome. The chain is Small ribosomal subunit protein uS11 from Ligilactobacillus salivarius (strain UCC118) (Lactobacillus salivarius).